The chain runs to 368 residues: tRNA 2-selenouridine synthase (368 aa).

Residues 12 to 136 enclose the Rhodanese domain; it reads FLGDAPLLDT…MRGFLLETIE (125 aa). The active-site S-selanylcysteine intermediate is the Cys95.

The protein belongs to the SelU family. As to quaternary structure, monomer.

The enzyme catalyses 5-methylaminomethyl-2-thiouridine(34) in tRNA + selenophosphate + (2E)-geranyl diphosphate + H2O + H(+) = 5-methylaminomethyl-2-selenouridine(34) in tRNA + (2E)-thiogeraniol + phosphate + diphosphate. It carries out the reaction 5-methylaminomethyl-2-thiouridine(34) in tRNA + (2E)-geranyl diphosphate = 5-methylaminomethyl-S-(2E)-geranyl-thiouridine(34) in tRNA + diphosphate. It catalyses the reaction 5-methylaminomethyl-S-(2E)-geranyl-thiouridine(34) in tRNA + selenophosphate + H(+) = 5-methylaminomethyl-2-(Se-phospho)selenouridine(34) in tRNA + (2E)-thiogeraniol. The catalysed reaction is 5-methylaminomethyl-2-(Se-phospho)selenouridine(34) in tRNA + H2O = 5-methylaminomethyl-2-selenouridine(34) in tRNA + phosphate. In terms of biological role, involved in the post-transcriptional modification of the uridine at the wobble position (U34) of tRNA(Lys), tRNA(Glu) and tRNA(Gln). Catalyzes the conversion of 2-thiouridine (S2U-RNA) to 2-selenouridine (Se2U-RNA). Acts in a two-step process involving geranylation of 2-thiouridine (S2U) to S-geranyl-2-thiouridine (geS2U) and subsequent selenation of the latter derivative to 2-selenouridine (Se2U) in the tRNA chain. The protein is tRNA 2-selenouridine synthase of Bordetella bronchiseptica (strain ATCC BAA-588 / NCTC 13252 / RB50) (Alcaligenes bronchisepticus).